The sequence spans 615 residues: DNA mismatch repair protein MutL (615 aa).

The segment at histidine 362–tyrosine 397 is disordered. Residues proline 378–proline 391 show a composition bias toward low complexity.

The protein belongs to the DNA mismatch repair MutL/HexB family.

This protein is involved in the repair of mismatches in DNA. It is required for dam-dependent methyl-directed DNA mismatch repair. May act as a 'molecular matchmaker', a protein that promotes the formation of a stable complex between two or more DNA-binding proteins in an ATP-dependent manner without itself being part of a final effector complex. This is DNA mismatch repair protein MutL from Escherichia fergusonii (strain ATCC 35469 / DSM 13698 / CCUG 18766 / IAM 14443 / JCM 21226 / LMG 7866 / NBRC 102419 / NCTC 12128 / CDC 0568-73).